Consider the following 120-residue polypeptide: Immunoglobulin kappa variable 2D-29 (120 aa).

The N-terminal stretch at 1-20 is a signal peptide; it reads MRLPAQLLGLLMLWIPGSSA. Positions 21-43 are framework-1; it reads DIVMTQTPLSLSVTPGQPASISC. The 100-residue stretch at 21 to 120 folds into the Ig-like domain; that stretch reads DIVMTQTPLS…YYCMQSIQLP (100 aa). Residues Cys-43 and Cys-113 are joined by a disulfide bond. Residues 44–59 are complementarity-determining-1; the sequence is KSSQSLLHSDGKTYLY. A framework-2 region spans residues 60–74; the sequence is WYLQKPGQPPQLLIY. Residues 75–81 form a complementarity-determining-2 region; it reads EVSNRFS. A framework-3 region spans residues 82–113; the sequence is GVPDRFSGSGSGTDFTLKISRVEAEDVGVYYC. Residues 114–120 form a complementarity-determining-3 region; it reads MQSIQLP.

As to quaternary structure, immunoglobulins are composed of two identical heavy chains and two identical light chains; disulfide-linked.

It localises to the secreted. The protein resides in the cell membrane. Functionally, v region of the variable domain of immunoglobulin light chains that participates in the antigen recognition. Immunoglobulins, also known as antibodies, are membrane-bound or secreted glycoproteins produced by B lymphocytes. In the recognition phase of humoral immunity, the membrane-bound immunoglobulins serve as receptors which, upon binding of a specific antigen, trigger the clonal expansion and differentiation of B lymphocytes into immunoglobulins-secreting plasma cells. Secreted immunoglobulins mediate the effector phase of humoral immunity, which results in the elimination of bound antigens. The antigen binding site is formed by the variable domain of one heavy chain, together with that of its associated light chain. Thus, each immunoglobulin has two antigen binding sites with remarkable affinity for a particular antigen. The variable domains are assembled by a process called V-(D)-J rearrangement and can then be subjected to somatic hypermutations which, after exposure to antigen and selection, allow affinity maturation for a particular antigen. In Homo sapiens (Human), this protein is Immunoglobulin kappa variable 2D-29.